Reading from the N-terminus, the 276-residue chain is Bifunctional protein FolD (276 aa).

Residues 157 to 159, S182, and I223 contribute to the NADP(+) site; that span reads NRS.

Belongs to the tetrahydrofolate dehydrogenase/cyclohydrolase family. As to quaternary structure, homodimer.

It catalyses the reaction (6R)-5,10-methylene-5,6,7,8-tetrahydrofolate + NADP(+) = (6R)-5,10-methenyltetrahydrofolate + NADPH. The enzyme catalyses (6R)-5,10-methenyltetrahydrofolate + H2O = (6R)-10-formyltetrahydrofolate + H(+). The protein operates within one-carbon metabolism; tetrahydrofolate interconversion. Functionally, catalyzes the oxidation of 5,10-methylenetetrahydrofolate to 5,10-methenyltetrahydrofolate and then the hydrolysis of 5,10-methenyltetrahydrofolate to 10-formyltetrahydrofolate. This chain is Bifunctional protein FolD, found in Thermoplasma acidophilum (strain ATCC 25905 / DSM 1728 / JCM 9062 / NBRC 15155 / AMRC-C165).